Reading from the N-terminus, the 347-residue chain is 4-hydroxy-2-oxovalerate aldolase 2 (347 aa).

Residues 9–259 (ITIVDTTLRD…DTGVDLFPLI (251 aa)) form the Pyruvate carboxyltransferase domain. Substrate-binding positions include 17–18 (RD), Ser171, and His198. Asp18 lines the Mn(2+) pocket. The Mn(2+) site is built by His198 and His200. Substrate is bound at residue Tyr289.

It belongs to the 4-hydroxy-2-oxovalerate aldolase family.

It carries out the reaction (S)-4-hydroxy-2-oxopentanoate = acetaldehyde + pyruvate. The sequence is that of 4-hydroxy-2-oxovalerate aldolase 2 from Rhodococcus opacus (strain B4).